Reading from the N-terminus, the 232-residue chain is Phosphatidylserine decarboxylase proenzyme (232 aa).

Catalysis depends on S190, which acts as the Schiff-base intermediate with substrate; via pyruvic acid. The residue at position 190 (S190) is a Pyruvic acid (Ser); by autocatalysis.

This sequence belongs to the phosphatidylserine decarboxylase family. PSD-A subfamily. As to quaternary structure, heterodimer of a large membrane-associated beta subunit and a small pyruvoyl-containing alpha subunit. Pyruvate is required as a cofactor. Is synthesized initially as an inactive proenzyme. Formation of the active enzyme involves a self-maturation process in which the active site pyruvoyl group is generated from an internal serine residue via an autocatalytic post-translational modification. Two non-identical subunits are generated from the proenzyme in this reaction, and the pyruvate is formed at the N-terminus of the alpha chain, which is derived from the carboxyl end of the proenzyme. The post-translation cleavage follows an unusual pathway, termed non-hydrolytic serinolysis, in which the side chain hydroxyl group of the serine supplies its oxygen atom to form the C-terminus of the beta chain, while the remainder of the serine residue undergoes an oxidative deamination to produce ammonia and the pyruvoyl prosthetic group on the alpha chain.

Its subcellular location is the cell membrane. It carries out the reaction a 1,2-diacyl-sn-glycero-3-phospho-L-serine + H(+) = a 1,2-diacyl-sn-glycero-3-phosphoethanolamine + CO2. It functions in the pathway phospholipid metabolism; phosphatidylethanolamine biosynthesis; phosphatidylethanolamine from CDP-diacylglycerol: step 2/2. Catalyzes the formation of phosphatidylethanolamine (PtdEtn) from phosphatidylserine (PtdSer). This chain is Phosphatidylserine decarboxylase proenzyme, found in Bradyrhizobium sp. (strain ORS 278).